The chain runs to 312 residues: Ribosomal RNA small subunit methyltransferase H (312 aa).

S-adenosyl-L-methionine is bound by residues 35-37, aspartate 54, phenylalanine 81, aspartate 100, and glutamine 107; that span reads GGH.

Belongs to the methyltransferase superfamily. RsmH family.

It is found in the cytoplasm. The enzyme catalyses cytidine(1402) in 16S rRNA + S-adenosyl-L-methionine = N(4)-methylcytidine(1402) in 16S rRNA + S-adenosyl-L-homocysteine + H(+). Functionally, specifically methylates the N4 position of cytidine in position 1402 (C1402) of 16S rRNA. The protein is Ribosomal RNA small subunit methyltransferase H of Campylobacter jejuni subsp. jejuni serotype O:2 (strain ATCC 700819 / NCTC 11168).